Here is a 208-residue protein sequence, read N- to C-terminus: Peptidyl-tRNA hydrolase 2 (208 aa).

Positions 32–45 (SNASSTKKSSATLL) are enriched in low complexity. The tract at residues 32 to 81 (SNASSTKKSSATLLRSKEMKEGKLHNDTDEEESESEDESDEDEDIESTSL) is disordered. Residues 46–58 (RSKEMKEGKLHND) are compositionally biased toward basic and acidic residues. Residues 59–77 (TDEEESESEDESDEDEDIE) show a composition bias toward acidic residues. Lys152 participates in a covalent cross-link: Glycyl lysine isopeptide (Lys-Gly) (interchain with G-Cter in ubiquitin).

It belongs to the PTH2 family.

The protein localises to the cytoplasm. The catalysed reaction is an N-acyl-L-alpha-aminoacyl-tRNA + H2O = an N-acyl-L-amino acid + a tRNA + H(+). Functionally, the natural substrate for this enzyme may be peptidyl-tRNAs which drop off the ribosome during protein synthesis. The sequence is that of Peptidyl-tRNA hydrolase 2 from Saccharomyces cerevisiae (strain ATCC 204508 / S288c) (Baker's yeast).